We begin with the raw amino-acid sequence, 77 residues long: Early E3 9.0 kDa glycoprotein (77 aa).

Residue Asn7 is glycosylated (N-linked (GlcNAc...) asparagine; by host). A helical membrane pass occupies residues 27 to 47; the sequence is ITILIVIGILILSVILYFIFC.

The protein belongs to the adenoviridae E3A-1 family.

The protein resides in the host nucleus membrane. This chain is Early E3 9.0 kDa glycoprotein, found in Human adenovirus B serotype 3 (HAdV-3).